Here is a 109-residue protein sequence, read N- to C-terminus: uncharacterized protein (109 aa).

This is an uncharacterized protein from Methanocaldococcus jannaschii (strain ATCC 43067 / DSM 2661 / JAL-1 / JCM 10045 / NBRC 100440) (Methanococcus jannaschii).